The following is a 259-amino-acid chain: MNITNINTTRIPAGTRLYLTKKKYNKFYIQPDKTLVNDNLFVAYDVKIGGVIAIPQGTRVLGNWVAESSPSIAVQLQLTKIFLYGSGQNISADSDLVETLVDYNSDEIDCAPYLYKIHHFKSPAGIYRRIVNTKCRSKILTDNNRNSIYLEVNTKEISVVLNEDIIPMPDLSKMPVPQSPSVPTMPSVNNDQPTQKPNKITRNYKPKHQHNYKPNYQPNYQPNYGQNCSNSHSNDYFSDYPTEHSGDSSSYSTYEDDDF.

A disordered region spans residues 171-259 (LSKMPVPQSP…SYSTYEDDDF (89 aa)). Residues 179–201 (SPSVPTMPSVNNDQPTQKPNKIT) are compositionally biased toward polar residues. Over residues 202-211 (RNYKPKHQHN) the composition is skewed to basic residues. Positions 212–236 (YKPNYQPNYQPNYGQNCSNSHSNDY) are enriched in polar residues.

The protein localises to the virion. This is an uncharacterized protein from Acanthamoeba polyphaga (Amoeba).